Here is a 241-residue protein sequence, read N- to C-terminus: Proteasome subunit beta type-6 (241 aa).

Positions 1–19 (MATIASEYSSEASNTPIEH) are excised as a propeptide.

It belongs to the peptidase T1B family. In terms of assembly, the 26S proteasome consists of a 20S proteasome core and two 19S regulatory subunits. The 20S proteasome core is composed of 28 subunits that are arranged in four stacked rings, resulting in a barrel-shaped structure. The two end rings are each formed by seven alpha subunits, and the two central rings are each formed by seven beta subunits. The catalytic chamber with the active sites is on the inside of the barrel.

The protein localises to the cytoplasm. It is found in the nucleus. Its function is as follows. Non-catalytic component of the proteasome which degrades poly-ubiquitinated proteins in the cytoplasm and in the nucleus. It is essential for the regulated turnover of proteins and for the removal of misfolded proteins. The proteasome is a multicatalytic proteinase complex that is characterized by its ability to cleave peptides with Arg, Phe, Tyr, Leu, and Glu adjacent to the leaving group at neutral or slightly basic pH. It has an ATP-dependent proteolytic activity. This chain is Proteasome subunit beta type-6 (PRE7), found in Saccharomyces cerevisiae (strain ATCC 204508 / S288c) (Baker's yeast).